We begin with the raw amino-acid sequence, 538 residues long: DALR anticodon-binding domain-containing protein 3 (538 aa).

Part of a complex containing tRNA(Arg) and METTL2. Interacts with tRNA(Arg)(CCU) and tRNA(Arg)(UCU). Interacts with METTL2.

Functionally, involved in tRNA methylation. Facilitates the recognition and targeting of tRNA(Arg)(CCU) and tRNA(Arg)(UCU) substrates for N(3)-methylcytidine modification by METTL2. The sequence is that of DALR anticodon-binding domain-containing protein 3 (Dalrd3) from Rattus norvegicus (Rat).